The sequence spans 314 residues: Ribosomal RNA small subunit methyltransferase H (314 aa).

S-adenosyl-L-methionine is bound by residues 32-34, Asp52, Phe79, Asp100, and Gln107; that span reads GGH.

This sequence belongs to the methyltransferase superfamily. RsmH family.

It localises to the cytoplasm. The catalysed reaction is cytidine(1402) in 16S rRNA + S-adenosyl-L-methionine = N(4)-methylcytidine(1402) in 16S rRNA + S-adenosyl-L-homocysteine + H(+). Specifically methylates the N4 position of cytidine in position 1402 (C1402) of 16S rRNA. The polypeptide is Ribosomal RNA small subunit methyltransferase H (Shouchella clausii (strain KSM-K16) (Alkalihalobacillus clausii)).